The chain runs to 260 residues: MQFDVITLFPDMFRALTDWGITSRAAKQQRYGLRTWNPRDFTVDNYRTIDDRPYGGGPGMVMLAKPLDDAIDAAVAAQAQAGVPEPHVVLMSPQGKTLSHAKVMELAERPGLVLLCGRYEAIDQRLIDRRVDEEISLGDFVLSGGELPAMALIDAVVRHLPGVLGDAQSAVQDSFVNGLLDCPHYTRPEEYEGVRVPEILLGGHHAEIEKWRRQQALANTASKRPDLIEAARKQGLLTRADEKFLSEWAAKEGRGETPAR.

S-adenosyl-L-methionine is bound by residues Gly-117 and 137-142 (LGDFVL).

The protein belongs to the RNA methyltransferase TrmD family. Homodimer.

It localises to the cytoplasm. The catalysed reaction is guanosine(37) in tRNA + S-adenosyl-L-methionine = N(1)-methylguanosine(37) in tRNA + S-adenosyl-L-homocysteine + H(+). Specifically methylates guanosine-37 in various tRNAs. This is tRNA (guanine-N(1)-)-methyltransferase from Cupriavidus necator (strain ATCC 17699 / DSM 428 / KCTC 22496 / NCIMB 10442 / H16 / Stanier 337) (Ralstonia eutropha).